The primary structure comprises 84 residues: Small ribosomal subunit protein bS16 (84 aa).

Belongs to the bacterial ribosomal protein bS16 family.

The sequence is that of Small ribosomal subunit protein bS16 from Methylococcus capsulatus (strain ATCC 33009 / NCIMB 11132 / Bath).